A 710-amino-acid polypeptide reads, in one-letter code: Chaperonin-containing T-complex member BBS12 (710 aa).

This sequence belongs to the TCP-1 chaperonin family. BBS12 subfamily. Component of the chaperonin-containing T-complex (TRiC), a heterooligomeric complex of about 850 to 900 kDa that forms two stacked rings, 12 to 16 nm in diameter. Interacts with MKKS.

The protein localises to the cell projection. Its subcellular location is the cilium. Its function is as follows. Component of the chaperonin-containing T-complex (TRiC), a molecular chaperone complex that assists the folding of proteins upon ATP hydrolysis. As part of the TRiC complex may play a role in the assembly of BBSome, a complex involved in ciliogenesis regulating transports vesicles to the cilia. Involved in adipogenic differentiation. This chain is Chaperonin-containing T-complex member BBS12 (BBS12), found in Pongo abelii (Sumatran orangutan).